Reading from the N-terminus, the 422-residue chain is Serine--tRNA ligase (422 aa).

229–231 (TAE) serves as a coordination point for L-serine. Position 260–262 (260–262 (RAE)) interacts with ATP. Glutamate 283 is an L-serine binding site. 347-350 (EISS) provides a ligand contact to ATP. Serine 383 provides a ligand contact to L-serine.

The protein belongs to the class-II aminoacyl-tRNA synthetase family. Type-1 seryl-tRNA synthetase subfamily. Homodimer. The tRNA molecule binds across the dimer.

It localises to the cytoplasm. The catalysed reaction is tRNA(Ser) + L-serine + ATP = L-seryl-tRNA(Ser) + AMP + diphosphate + H(+). It carries out the reaction tRNA(Sec) + L-serine + ATP = L-seryl-tRNA(Sec) + AMP + diphosphate + H(+). It functions in the pathway aminoacyl-tRNA biosynthesis; selenocysteinyl-tRNA(Sec) biosynthesis; L-seryl-tRNA(Sec) from L-serine and tRNA(Sec): step 1/1. Catalyzes the attachment of serine to tRNA(Ser). Is also able to aminoacylate tRNA(Sec) with serine, to form the misacylated tRNA L-seryl-tRNA(Sec), which will be further converted into selenocysteinyl-tRNA(Sec). The polypeptide is Serine--tRNA ligase (Halothermothrix orenii (strain H 168 / OCM 544 / DSM 9562)).